Consider the following 303-residue polypeptide: Nucleotide-binding protein USA300HOU_0794 (303 aa).

18–25 (GLSGAGKS) contributes to the ATP binding site. Residue 69-72 (DLRG) participates in GTP binding.

The protein belongs to the RapZ-like family.

Functionally, displays ATPase and GTPase activities. The chain is Nucleotide-binding protein USA300HOU_0794 from Staphylococcus aureus (strain USA300 / TCH1516).